The chain runs to 239 residues: tRNA (guanine-N(1)-)-methyltransferase (239 aa).

S-adenosyl-L-methionine-binding positions include glycine 108 and 127-132 (LGDYVL).

It belongs to the RNA methyltransferase TrmD family. In terms of assembly, homodimer.

The protein localises to the cytoplasm. It catalyses the reaction guanosine(37) in tRNA + S-adenosyl-L-methionine = N(1)-methylguanosine(37) in tRNA + S-adenosyl-L-homocysteine + H(+). Functionally, specifically methylates guanosine-37 in various tRNAs. This Streptococcus pneumoniae (strain JJA) protein is tRNA (guanine-N(1)-)-methyltransferase.